The primary structure comprises 333 residues: uncharacterized protein (333 aa).

The interval Pro-234 to Asp-333 is disordered. Pro residues predominate over residues Val-251–Glu-265. The span at Gly-324–Asp-333 shows a compositional bias: polar residues.

It is found in the cell projection. It localises to the cilium. The protein localises to the flagellum. This is an uncharacterized protein from Homo sapiens (Human).